Here is a 259-residue protein sequence, read N- to C-terminus: Insulin-induced gene 1 protein (259 aa).

Over 1-66 (MPRLHDHVWN…ARPGSWHHDL (66 aa)) the chain is Cytoplasmic. Residues 36–55 (PGVPEPEHAPRGQRAGTTGC) are disordered. Residues 67–89 (VQRSLVLFSFGVVLALVLNLLQI) traverse the membrane as a helical segment. Residues 90–108 (QRNVTLFPDEVIATIFSSA) are Extracellular-facing. The chain crosses the membrane as a helical span at residues 109–126 (WWVPPCCGTAAAVVGLLY). Topologically, residues 127 to 141 (PCIDSHLGEPHKFKR) are cytoplasmic. Glycyl lysine isopeptide (Lys-Gly) (interchain with G-Cter in ubiquitin) cross-links involve residues lysine 138 and lysine 140. A helical membrane pass occupies residues 142–164 (EWASVMRCIAVFVGINHASAKLD). Residues 165-167 (FAN) are Extracellular-facing. The helical transmembrane segment at 168-186 (NVQLSLTLAALSLGLWWTF) threads the bilayer. The Cytoplasmic segment spans residues 187–191 (DRSRS). A Phosphoserine modification is found at serine 189. A helical transmembrane segment spans residues 192–213 (GLGLGITIAFLATLITQFLVYN). At 214-227 (GVYQYTSPDFLYIR) the chain is on the extracellular side. A helical membrane pass occupies residues 228–245 (SWLPCIFFSGGVTVGNIG). Residues 246-259 (RQLAMGVPEKPHSD) are Cytoplasmic-facing. Residues 253–259 (PEKPHSD) carry the KxHxx motif.

It belongs to the INSIG family. In terms of assembly, interacts with SCAP; interaction is direct and only takes place in the presence of sterols; it prevents interaction between SCAP and the coat protein complex II (COPII). Associates with the SCAP-SREBP complex (composed of SCAP and SREBF1/SREBP1 or SREBF2/SREBP2); association is mediated via its interaction with SCAP and only takes place in the presence of sterols. Interaction with SCAP is mutually exclusive with PAQR3. Interacts with HMGCR (via its SSD); the interaction, accelerated by sterols, leads to the recruitment of HMGCR to AMFR/gp78 for its ubiquitination by the sterol-mediated ERAD pathway. Interacts with AMFR/gp78 (via its membrane domain); the interaction recruits HMCR at the ER membrane for its ubiquitination and degradation by the sterol-mediated ERAD pathway. Interacts with SOAT2/ACAT2; leading to promote recruitment of AMFR/gp78 and subsequent ubiquitination of SOAT2/ACAT2. Interacts with RNF139. Interacts with RNF145. In terms of processing, phosphorylation at Ser-189 by PCK1 reduces binding to oxysterol, disrupting the interaction between INSIG1 and SCAP, thereby promoting nuclear translocation of SREBP proteins (SREBF1/SREBP1 or SREBF2/SREBP2) and subsequent transcription of downstream lipogenesis-related genes. Ubiquitinated by AMFR/gp78 in response to sterol deprivation, leading to its degradation: when the SCAP-SREBP complex becomes dissociated from INSIG1, INSIG1 is then ubiquitinated and degraded in proteasomes. Although ubiquitination is required for rapid INSIG1 degradation, it is not required for release of the SCAP-SREBP complex. Ubiquitinated by RNF139.

Its subcellular location is the endoplasmic reticulum membrane. In terms of biological role, oxysterol-binding protein that mediates feedback control of cholesterol synthesis by controlling both endoplasmic reticulum to Golgi transport of SCAP and degradation of HMGCR. Acts as a negative regulator of cholesterol biosynthesis by mediating the retention of the SCAP-SREBP complex in the endoplasmic reticulum, thereby blocking the processing of sterol regulatory element-binding proteins (SREBPs) SREBF1/SREBP1 and SREBF2/SREBP2. Binds oxysterol, including 25-hydroxycholesterol, regulating interaction with SCAP and retention of the SCAP-SREBP complex in the endoplasmic reticulum. In presence of oxysterol, interacts with SCAP, retaining the SCAP-SREBP complex in the endoplasmic reticulum, thereby preventing SCAP from escorting SREBF1/SREBP1 and SREBF2/SREBP2 to the Golgi. Sterol deprivation or phosphorylation by PCK1 reduce oxysterol-binding, disrupting the interaction between INSIG1 and SCAP, thereby promoting Golgi transport of the SCAP-SREBP complex, followed by processing and nuclear translocation of SREBF1/SREBP1 and SREBF2/SREBP2. Also regulates cholesterol synthesis by regulating degradation of HMGCR: initiates the sterol-mediated ubiquitin-mediated endoplasmic reticulum-associated degradation (ERAD) of HMGCR via recruitment of the reductase to the ubiquitin ligases AMFR/gp78 and/or RNF139. Also regulates degradation of SOAT2/ACAT2 when the lipid levels are low: initiates the ubiquitin-mediated degradation of SOAT2/ACAT2 via recruitment of the ubiquitin ligases AMFR/gp78. This chain is Insulin-induced gene 1 protein, found in Mus musculus (Mouse).